The sequence spans 71 residues: Small ribosomal subunit protein bS21 (71 aa).

This sequence belongs to the bacterial ribosomal protein bS21 family.

This Nitrosococcus oceani (strain ATCC 19707 / BCRC 17464 / JCM 30415 / NCIMB 11848 / C-107) protein is Small ribosomal subunit protein bS21.